A 492-amino-acid polypeptide reads, in one-letter code: 3,6-anhydro-alpha-L-galactose dehydrogenase (492 aa).

NADP(+)-binding positions include Trp160–Asn161, Lys184–Glu187, and Gly237–Ser238. Glu259 acts as the Proton acceptor in catalysis. Leu260 is an NADP(+) binding site. Cys293 functions as the Nucleophile in the catalytic mechanism. Glu394 contacts NADP(+).

Belongs to the aldehyde dehydrogenase family.

It carries out the reaction 3,6-anhydro-alpha-L-galactopyranose + NADP(+) + H2O = 3,6-anhydro-L-galactonate + NADPH + 2 H(+). Its activity is regulated as follows. Significantly inhibited by EDTA. Activity is enhanced by Fe(2+), but is strongly inhibited by Mn(2+), Cu(2+), Zn(2+), Ni(2+) and Co(2+). Its function is as follows. Involved in the degradation of 3,6-anhydro-L-galactose, which is the major monomeric sugar of red macroalgae. Catalyzes the oxidation of 3,6-anhydro-L-galactose (AHG) to form 3,6-anhydrogalactonate (AHGA). Shows broad substrate specificity, with maximum activity toward AHG. The enzyme activities toward D-fructose, D-galactose and D-ribose are between 40% and 50% of the maximum, but those toward L-rhamnose, L-glyceraldehyde, D-glyceraldehyde, L-fucose and D-glucose are much lower. This Streptomyces coelicolor (strain ATCC BAA-471 / A3(2) / M145) protein is 3,6-anhydro-alpha-L-galactose dehydrogenase.